Consider the following 631-residue polypeptide: Chaperone protein HtpG (631 aa).

Residues Met-1 to Arg-342 form an a; substrate-binding region. The interval Glu-343 to Lys-559 is b. Residues Leu-560–Lys-631 are c.

The protein belongs to the heat shock protein 90 family. Homodimer.

The protein localises to the cytoplasm. In terms of biological role, molecular chaperone. Has ATPase activity. The polypeptide is Chaperone protein HtpG (Aliivibrio fischeri (strain ATCC 700601 / ES114) (Vibrio fischeri)).